A 163-amino-acid chain; its full sequence is Deoxyuridine 5'-triphosphate nucleotidohydrolase (163 aa).

It belongs to the dUTPase family. The cofactor is Mg(2+).

The catalysed reaction is dUTP + H2O = dUMP + diphosphate + H(+). The protein operates within pyrimidine metabolism; dUMP biosynthesis; dUMP from dCTP (dUTP route): step 2/2. In terms of biological role, this enzyme is involved in nucleotide metabolism: it produces dUMP, the immediate precursor of thymidine nucleotides and it decreases the intracellular concentration of dUTP so that uracil cannot be incorporated into DNA. This Galliformes (FAdV-8) protein is Deoxyuridine 5'-triphosphate nucleotidohydrolase.